Reading from the N-terminus, the 465-residue chain is Glutamate--tRNA ligase 2 (465 aa).

Residues 8-18 carry the 'HIGH' region motif; the sequence is PSPTGLMHLGN. Residues 249 to 253 carry the 'KMSKS' region motif; that stretch reads PLSKR. Residue K252 participates in ATP binding.

The protein belongs to the class-I aminoacyl-tRNA synthetase family. Glutamate--tRNA ligase type 1 subfamily. In terms of assembly, monomer.

It is found in the cytoplasm. The enzyme catalyses tRNA(Glu) + L-glutamate + ATP = L-glutamyl-tRNA(Glu) + AMP + diphosphate. Its function is as follows. Catalyzes the attachment of glutamate to tRNA(Glu) in a two-step reaction: glutamate is first activated by ATP to form Glu-AMP and then transferred to the acceptor end of tRNA(Glu). This chain is Glutamate--tRNA ligase 2, found in Coxiella burnetii (strain RSA 331 / Henzerling II).